The following is a 126-amino-acid chain: Glycine cleavage system H protein (126 aa).

The region spanning 23–104 (TLTVGITDHA…PYESWLFKIK (82 aa)) is the Lipoyl-binding domain. Residue K64 is modified to N6-lipoyllysine.

The protein belongs to the GcvH family. In terms of assembly, the glycine cleavage system is composed of four proteins: P, T, L and H. It depends on (R)-lipoate as a cofactor.

The glycine cleavage system catalyzes the degradation of glycine. The H protein shuttles the methylamine group of glycine from the P protein to the T protein. This is Glycine cleavage system H protein from Paraburkholderia phytofirmans (strain DSM 17436 / LMG 22146 / PsJN) (Burkholderia phytofirmans).